Consider the following 464-residue polypeptide: Gamma-aminobutyric acid receptor subunit rho-3 (464 aa).

An N-terminal signal peptide occupies residues Met-1–Ile-15. Topologically, residues Thr-16–His-263 are extracellular. 4-aminobutanoate is bound at residue Arg-108. N-linked (GlcNAc...) asparagine glycosylation is present at Asn-123. Ser-172 contributes to the 4-aminobutanoate binding site. A disulfide bond links Cys-181 and Cys-195. An N-linked (GlcNAc...) asparagine glycan is attached at Asn-194. Glu-200 lines the 4-aminobutanoate pocket. A helical transmembrane segment spans residues Ile-264 to Val-284. Residues Ser-285 to Arg-296 are Cytoplasmic-facing. A helical transmembrane segment spans residues Val-297–Ser-317. At Met-318–Asp-328 the chain is on the extracellular side. A helical membrane pass occupies residues Val-329–Asn-349. The segment at Glu-344–Arg-445 is interaction with SQSTM1. At Tyr-350–Tyr-443 the chain is on the cytoplasmic side. Residues Ser-444 to Val-464 traverse the membrane as a helical segment.

The protein belongs to the ligand-gated ion channel (TC 1.A.9) family. Gamma-aminobutyric acid receptor (TC 1.A.9.5) subfamily. GABRR3 sub-subfamily. Three rho subunits (rho-1/GBRR1, rho-2/GBRR2 and rho-3/GBRR3) coassemble either to form functional homopentamers or heteropentamers. Forms a ternary complex with SQSTM1 and PRKCZ. Expressed in retina.

It localises to the postsynaptic cell membrane. The protein resides in the cell membrane. The catalysed reaction is chloride(in) = chloride(out). Activated by agonists in the following the potency order: muscimol &gt; TACP &gt; TACA &gt; thiomuscimol &gt; CAMP &gt; CACA, when forming a homopentamer. Inhibited by TPMPA, a rho-specific antagonist, when forming a homopentamer. Inhibited antagonists in the following the potency order: TAMP = TPMPA &gt; P4MPA = THIP &gt; 14AA &gt; 3-APA, when forming a homopentamer. Its function is as follows. Rho subunit of the pentameric ligand-gated chloride channels responsible for mediating the effects of gamma-aminobutyric acid (GABA), the major inhibitory neurotransmitter in the brain. Rho-containing GABA-gated chloride channels are a subclass of GABA(A) receptors (GABAARs) entirely composed of rho subunits, where GABA molecules bind at the rho intersubunit interfaces. When activated by GABA, rho-GABAARs selectively allow the flow of chloride anions across the cell membrane down their electrochemical gradient. The protein is Gamma-aminobutyric acid receptor subunit rho-3 of Rattus norvegicus (Rat).